The sequence spans 147 residues: 6,7-dimethyl-8-ribityllumazine synthase (147 aa).

5-amino-6-(D-ribitylamino)uracil-binding positions include F16, 48–50 (TFD), and 73–75 (AVI). 78 to 79 (DT) contributes to the (2S)-2-hydroxy-3-oxobutyl phosphate binding site. H81 serves as the catalytic Proton donor. L106 contacts 5-amino-6-(D-ribitylamino)uracil. Residue R121 coordinates (2S)-2-hydroxy-3-oxobutyl phosphate.

It belongs to the DMRL synthase family.

It catalyses the reaction (2S)-2-hydroxy-3-oxobutyl phosphate + 5-amino-6-(D-ribitylamino)uracil = 6,7-dimethyl-8-(1-D-ribityl)lumazine + phosphate + 2 H2O + H(+). It participates in cofactor biosynthesis; riboflavin biosynthesis; riboflavin from 2-hydroxy-3-oxobutyl phosphate and 5-amino-6-(D-ribitylamino)uracil: step 1/2. Catalyzes the formation of 6,7-dimethyl-8-ribityllumazine by condensation of 5-amino-6-(D-ribitylamino)uracil with 3,4-dihydroxy-2-butanone 4-phosphate. This is the penultimate step in the biosynthesis of riboflavin. The protein is 6,7-dimethyl-8-ribityllumazine synthase of Aeropyrum pernix (strain ATCC 700893 / DSM 11879 / JCM 9820 / NBRC 100138 / K1).